Consider the following 164-residue polypeptide: Protein-export protein SecB (164 aa).

Residues 1–12 show a composition bias toward basic and acidic residues; that stretch reads MPDKDEITHDAQ. The interval 1–22 is disordered; it reads MPDKDEITHDAQSENEESLPLA.

This sequence belongs to the SecB family. Homotetramer, a dimer of dimers. One homotetramer interacts with 1 SecA dimer.

It localises to the cytoplasm. Functionally, one of the proteins required for the normal export of preproteins out of the cell cytoplasm. It is a molecular chaperone that binds to a subset of precursor proteins, maintaining them in a translocation-competent state. It also specifically binds to its receptor SecA. This is Protein-export protein SecB from Neorickettsia sennetsu (strain ATCC VR-367 / Miyayama) (Ehrlichia sennetsu).